The following is a 116-amino-acid chain: NADH-ubiquinone oxidoreductase chain 3 (116 aa).

Helical transmembrane passes span 3-23 (LVIS…VVSF), 56-76 (FFLV…LLAL), and 85-105 (ATGT…GLIY).

Belongs to the complex I subunit 3 family.

It localises to the mitochondrion membrane. The enzyme catalyses a ubiquinone + NADH + 5 H(+)(in) = a ubiquinol + NAD(+) + 4 H(+)(out). Its function is as follows. Core subunit of the mitochondrial membrane respiratory chain NADH dehydrogenase (Complex I) that is believed to belong to the minimal assembly required for catalysis. Complex I functions in the transfer of electrons from NADH to the respiratory chain. The immediate electron acceptor for the enzyme is believed to be ubiquinone. This chain is NADH-ubiquinone oxidoreductase chain 3 (MT-ND3), found in Formosania lacustris (Oriental stream loach).